We begin with the raw amino-acid sequence, 190 residues long: Transcription antitermination protein NusB (190 aa).

The segment at 135–190 (APAPESVAEEADEESSDSAAAASEPTDEGDVSDSPDSSGASDEPAAPSAEIQPTVD) is disordered. Residues 141–150 (VAEEADEESS) are compositionally biased toward acidic residues.

The protein belongs to the NusB family.

Involved in transcription antitermination. Required for transcription of ribosomal RNA (rRNA) genes. Binds specifically to the boxA antiterminator sequence of the ribosomal RNA (rrn) operons. The polypeptide is Transcription antitermination protein NusB (Bifidobacterium longum (strain DJO10A)).